Reading from the N-terminus, the 466-residue chain is Citrate synthase, mitochondrial (466 aa).

The transit peptide at 1 to 27 (MALLTAAARLLGAKNSSCLVLAARHAS) directs the protein to the mitochondrion. The SIFI-degron signature appears at 2–21 (ALLTAAARLLGAKNSSCLVL). N6-succinyllysine is present on lysine 57. Lysine 76 bears the N6-acetyllysine; alternate mark. The residue at position 76 (lysine 76) is an N6-succinyllysine; alternate. N6-succinyllysine occurs at positions 103 and 193. Serine 226 is modified (phosphoserine). The active site involves histidine 301. An N6-acetyllysine; alternate mark is found at lysine 321 and lysine 327. Residues lysine 321 and lysine 327 each carry the N6-succinyllysine; alternate modification. Residue histidine 347 is part of the active site. Residue arginine 356 coordinates oxaloacetate. Lysine 375 bears the N6-acetyllysine; alternate mark. Lysine 375 is modified (N6-succinyllysine; alternate). Lysine 382 is modified (N6-acetyllysine). Lysine 393 bears the N6-acetyllysine; alternate mark. N6-succinyllysine; alternate is present on lysine 393. The residue at position 395 (lysine 395) is an N6,N6,N6-trimethyllysine. Residue aspartate 402 is part of the active site. 2 residues coordinate oxaloacetate: arginine 428 and arginine 448. Lysine 450 carries the N6-succinyllysine modification. Lysine 459 carries the N6-acetyllysine; alternate modification. An N6-succinyllysine; alternate modification is found at lysine 459.

Belongs to the citrate synthase family. In terms of assembly, homodimer. Post-translationally, methylated. Trimethylation at Lys-395 by CSKMT decreases citrate synthase activity. In terms of processing, in response to mitochondrial stress, the precursor protein is ubiquitinated by the SIFI complex in the cytoplasm before mitochondrial import, leading to its degradation. Within the SIFI complex, UBR4 initiates ubiquitin chain that are further elongated or branched by KCMF1. In terms of tissue distribution, expressed in the head region and flagellum of epididymal sperm.

It localises to the mitochondrion matrix. The enzyme catalyses oxaloacetate + acetyl-CoA + H2O = citrate + CoA + H(+). It participates in carbohydrate metabolism; tricarboxylic acid cycle; isocitrate from oxaloacetate: step 1/2. Its function is as follows. Key enzyme of the Krebs tricarboxylic acid cycle which catalyzes the synthesis of citrate from acetyl coenzyme A and oxaloacetate. The chain is Citrate synthase, mitochondrial (Cs) from Rattus norvegicus (Rat).